Reading from the N-terminus, the 128-residue chain is MCLIWGLFSVIIASVAQLSLGFAASHLPPMTHLWDFIAALLAFGLDARILLLGLLGYLLSVFCWYKTLHKLALSKAYALLSMSYVLVWIASMVLPGWEGTFSLKALLGVACIMSGLMLIFLPTTKQRY.

The Cytoplasmic segment spans residues 1 to 2 (MC). A helical membrane pass occupies residues 3–23 (LIWGLFSVIIASVAQLSLGFA). At 24 to 35 (ASHLPPMTHLWD) the chain is on the periplasmic side. Residues 36-56 (FIAALLAFGLDARILLLGLLG) form a helical membrane-spanning segment. At 57–76 (YLLSVFCWYKTLHKLALSKA) the chain is on the cytoplasmic side. The helical transmembrane segment at 77–97 (YALLSMSYVLVWIASMVLPGW) threads the bilayer. The Periplasmic portion of the chain corresponds to 98–100 (EGT). A helical membrane pass occupies residues 101-121 (FSLKALLGVACIMSGLMLIFL). At 122 to 128 (PTTKQRY) the chain is on the cytoplasmic side.

This sequence belongs to the ArnF family. Heterodimer of ArnE and ArnF.

Its subcellular location is the cell inner membrane. Its pathway is bacterial outer membrane biogenesis; lipopolysaccharide biosynthesis. Functionally, translocates 4-amino-4-deoxy-L-arabinose-phosphoundecaprenol (alpha-L-Ara4N-phosphoundecaprenol) from the cytoplasmic to the periplasmic side of the inner membrane. The chain is Probable 4-amino-4-deoxy-L-arabinose-phosphoundecaprenol flippase subunit ArnF from Shigella flexneri.